Here is a 114-residue protein sequence, read N- to C-terminus: Protein preY, mitochondrial (114 aa).

The N-terminal 35 residues, 1–35 (MLSGARCRLASALRGTRAPPSAVARRCLHASGSRP), are a transit peptide targeting the mitochondrion. The disordered stretch occupies residues 14 to 49 (RGTRAPPSAVARRCLHASGSRPLADRGKKTEEPPRD). A compositionally biased stretch (basic and acidic residues) spans 36–49 (LADRGKKTEEPPRD). The TRM112 domain maps to 51–97 (DPALLEFLVCPLSKKPLRYEASTNELINEELGIAYPIIDGIPNMIPQ).

It belongs to the PREY family. As to quaternary structure, interacts (via TRM112 domain) with NDUFAF5; the interaction is direct and stabilizes NDUFAF5 protein. Interacts with COQ5; the interaction is direct, stabilizes COQ5 protein and associates PYURF with COQ enzyme complex.

The protein localises to the mitochondrion. In terms of biological role, in mitochondria, S-adenosylmethionine-dependent methyltransferase chaperone that supports both coenzyme Q biosynthesis, by stabilizing its components, such as COQ5, and NADH:ubiquinone oxidoreductase complex (complex I, MT-ND1) assembly, by stabilizing complex I assembly factors, such as NDUFAF5. The protein is Protein preY, mitochondrial of Homo sapiens (Human).